The following is a 527-amino-acid chain: tRNA-2-methylthio-N(6)-dimethylallyladenosine synthase (527 aa).

The tract at residues 1-27 (MMNEKQRLQYTAQIETDHPTDKKSALD) is disordered. The segment covering 15–27 (ETDHPTDKKSALD) has biased composition (basic and acidic residues). In terms of domain architecture, MTTase N-terminal spans 84–202 (RKFYIRTYGC…LPYILKEAYM (119 aa)). [4Fe-4S] cluster is bound by residues C93, C129, C163, C239, C243, and C246. In terms of domain architecture, Radical SAM core spans 225 to 455 (RKGNIKAWVN…NALVNEISAK (231 aa)). One can recognise a TRAM domain in the interval 458 to 521 (KEYEGQVVEV…TWTLNGEMVE (64 aa)).

Belongs to the methylthiotransferase family. MiaB subfamily. As to quaternary structure, monomer. [4Fe-4S] cluster is required as a cofactor.

The protein resides in the cytoplasm. The catalysed reaction is N(6)-dimethylallyladenosine(37) in tRNA + (sulfur carrier)-SH + AH2 + 2 S-adenosyl-L-methionine = 2-methylsulfanyl-N(6)-dimethylallyladenosine(37) in tRNA + (sulfur carrier)-H + 5'-deoxyadenosine + L-methionine + A + S-adenosyl-L-homocysteine + 2 H(+). In terms of biological role, catalyzes the methylthiolation of N6-(dimethylallyl)adenosine (i(6)A), leading to the formation of 2-methylthio-N6-(dimethylallyl)adenosine (ms(2)i(6)A) at position 37 in tRNAs that read codons beginning with uridine. The protein is tRNA-2-methylthio-N(6)-dimethylallyladenosine synthase of Anoxybacillus flavithermus (strain DSM 21510 / WK1).